The sequence spans 151 residues: MNPLRRKRLLIILAILVGVGVAVGLALSALQQNINLFYTPTQIANGEAPQDTRIRAGGMVEAGSLKRSGDSLDVTFVVTDFNKSVTITYRGILPDLFREGQGIVALGKINADGVVVADEVLAKHDEKYMPPEVTKALKESGQSAPTPAKEG.

At 1–8 (MNPLRRKR) the chain is on the cytoplasmic side. A helical; Signal-anchor for type II membrane protein membrane pass occupies residues 9 to 29 (LLIILAILVGVGVAVGLALSA). Residues 30–151 (LQQNINLFYT…QSAPTPAKEG (122 aa)) are Periplasmic-facing. Residues His124 and Tyr128 each coordinate heme.

The protein belongs to the CcmE/CycJ family.

The protein localises to the cell inner membrane. Heme chaperone required for the biogenesis of c-type cytochromes. Transiently binds heme delivered by CcmC and transfers the heme to apo-cytochromes in a process facilitated by CcmF and CcmH. The chain is Cytochrome c-type biogenesis protein CcmE from Pseudomonas fluorescens biotype C.